The chain runs to 190 residues: MQLLMRVPSLPELGELDCNICFRPYNLGARAPRRLPGTARARCGHTLCTACLRELAARGDGSRTAARVVRLRRAVTCPFCRAPSPLPRGGVTEIALDPVLWSRLEEKARAEREGDPMGSPAKDSGEDGEDDDGEAESEKGAGPPSAGWRALRRILDRVLAPARRLRRPLPSNVLYCPEVKDIAHMTRCTL.

Residues 18–81 (CNICFRPYNL…RRAVTCPFCR (64 aa)) form an RING-type zinc finger. The interval 108–147 (ARAEREGDPMGSPAKDSGEDGEDDDGEAESEKGAGPPSAG) is disordered. The span at 126–135 (EDGEDDDGEA) shows a compositional bias: acidic residues.

The chain is RING finger protein 227 from Mus musculus (Mouse).